Reading from the N-terminus, the 444-residue chain is uncharacterized protein (444 aa).

An HTH gntR-type domain is found at Met1–Lys69. The segment at residues Ile29–Gln48 is a DNA-binding region (H-T-H motif). Lys286 carries the N6-(pyridoxal phosphate)lysine modification.

In the C-terminal section; belongs to the class-I pyridoxal-phosphate-dependent aminotransferase family. It depends on pyridoxal 5'-phosphate as a cofactor.

This is an uncharacterized protein from Bacillus subtilis (strain 168).